A 410-amino-acid chain; its full sequence is Platelet-activating factor acetylhydrolase IB subunit beta (410 aa).

The tract at residues 1-38 is required for self-association and interaction with PAFAH1B2 and PAFAH1B3; sequence MVLSQRQRDELNRAIADYLRSNGYEEAYSVFKKEAELD. Positions 1–66 are interaction with NDE1; sequence MVLSQRQRDE…SVIRLQKKVM (66 aa). The interaction with NDEL1 stretch occupies residues 1–102; it reads MVLSQRQRDE…EWIPRPPEKY (102 aa). The region spanning 7 to 39 is the LisH domain; it reads QRDELNRAIADYLRSNGYEEAYSVFKKEAELDV. Lys53 bears the N6-acetyllysine mark. A coiled-coil region spans residues 56 to 82; the sequence is TSVIRLQKKVMELESKLNEAKEEFTSG. The interval 83–410 is interaction with dynein and dynactin; the sequence is GPLGQKRDPK…DQTVKVWECR (328 aa). 7 WD repeats span residues 106 to 147, 148 to 187, 190 to 229, 232 to 271, 274 to 333, 336 to 377, and 378 to 410; these read GHRS…RTLK, GHTD…CIRT, GHDH…CVKT, GHRE…CKAE, EHEH…CLMT, GHDN…KTLN, and AHEH…WECR. Ser109 is modified (phosphoserine). Positions 367–409 are interaction with DCX; sequence YKNKRCMKTLNAHEHFVTSLDFHKTAPYVVTGSVDQTVKVWEC. Residues 388–410 are interaction with NDEL1; the sequence is FHKTAPYVVTGSVDQTVKVWECR.

Belongs to the WD repeat LIS1/nudF family. As to quaternary structure, component of the cytosolic PAF-AH (I) heterotetrameric enzyme, which is composed of PAFAH1B1 (beta), PAFAH1B2 (alpha2) and PAFAH1B3 (alpha1) subunits. The catalytic activity of the enzyme resides in the alpha1 (PAFAH1B3) and alpha2 (PAFAH1B2) subunits, whereas the beta subunit (PAFAH1B1) has regulatory activity. Trimer formation is not essential for the catalytic activity. Interacts with the catalytic dimer of PAF-AH (I) heterotetrameric enzyme: interacts with PAFAH1B2 homodimer (alpha2/alpha2 homodimer), PAFAH1B3 homodimer (alpha1/alpha1 homodimer) and PAFAH1B2-PAFAH1B3 heterodimer (alpha2/alpha1 heterodimer). Interacts with IQGAP1, KATNB1 and NUDC. Interacts with DAB1 when DAB1 is phosphorylated in response to RELN/reelin signaling. Can self-associate. Interacts with DCX, dynein, dynactin, NDE1, NDEL1 and RSN. Interacts with DISC1, and this interaction is enhanced by NDEL1. Interacts with INTS13. Interacts with DCDC1. In terms of tissue distribution, fairly ubiquitous expression in both the frontal and occipital areas of the brain.

The protein localises to the cytoplasm. Its subcellular location is the cytoskeleton. It is found in the microtubule organizing center. It localises to the centrosome. The protein resides in the spindle. The protein localises to the nucleus membrane. Its function is as follows. Regulatory subunit (beta subunit) of the cytosolic type I platelet-activating factor (PAF) acetylhydrolase (PAF-AH (I)), an enzyme that catalyzes the hydrolyze of the acetyl group at the sn-2 position of PAF and its analogs and participates in PAF inactivation. Regulates the PAF-AH (I) activity in a catalytic dimer composition-dependent manner. Required for proper activation of Rho GTPases and actin polymerization at the leading edge of locomoting cerebellar neurons and postmigratory hippocampal neurons in response to calcium influx triggered via NMDA receptors. Positively regulates the activity of the minus-end directed microtubule motor protein dynein. May enhance dynein-mediated microtubule sliding by targeting dynein to the microtubule plus end. Required for several dynein- and microtubule-dependent processes such as the maintenance of Golgi integrity, the peripheral transport of microtubule fragments and the coupling of the nucleus and centrosome. Required during brain development for the proliferation of neuronal precursors and the migration of newly formed neurons from the ventricular/subventricular zone toward the cortical plate. Neuronal migration involves a process called nucleokinesis, whereby migrating cells extend an anterior process into which the nucleus subsequently translocates. During nucleokinesis dynein at the nuclear surface may translocate the nucleus towards the centrosome by exerting force on centrosomal microtubules. May also play a role in other forms of cell locomotion including the migration of fibroblasts during wound healing. Required for dynein recruitment to microtubule plus ends and BICD2-bound cargos. May modulate the Reelin pathway through interaction of the PAF-AH (I) catalytic dimer with VLDLR. This Homo sapiens (Human) protein is Platelet-activating factor acetylhydrolase IB subunit beta.